Here is a 315-residue protein sequence, read N- to C-terminus: Aspartate carbamoyltransferase catalytic subunit (315 aa).

2 residues coordinate carbamoyl phosphate: Arg-65 and Thr-66. Lys-93 serves as a coordination point for L-aspartate. Arg-115, His-143, and Gln-146 together coordinate carbamoyl phosphate. Residues Arg-176 and Arg-231 each contribute to the L-aspartate site. 2 residues coordinate carbamoyl phosphate: Gly-272 and Pro-273.

The protein belongs to the aspartate/ornithine carbamoyltransferase superfamily. ATCase family. Heterododecamer (2C3:3R2) of six catalytic PyrB chains organized as two trimers (C3), and six regulatory PyrI chains organized as three dimers (R2).

The catalysed reaction is carbamoyl phosphate + L-aspartate = N-carbamoyl-L-aspartate + phosphate + H(+). Its pathway is pyrimidine metabolism; UMP biosynthesis via de novo pathway; (S)-dihydroorotate from bicarbonate: step 2/3. Catalyzes the condensation of carbamoyl phosphate and aspartate to form carbamoyl aspartate and inorganic phosphate, the committed step in the de novo pyrimidine nucleotide biosynthesis pathway. The polypeptide is Aspartate carbamoyltransferase catalytic subunit (Hyphomonas neptunium (strain ATCC 15444)).